We begin with the raw amino-acid sequence, 277 residues long: Undecaprenyl-diphosphatase 1 (277 aa).

The next 7 membrane-spanning stretches (helical) occupy residues 46–66 (VVGF…VYFF), 95–115 (WWVI…KSLI), 119–139 (LASL…MWAA), 165–185 (ILAL…TALI), 191–211 (VAAT…AGLY), 216–236 (ALGT…SFVV), and 256–276 (FVIY…TGVL).

Belongs to the UppP family.

The protein resides in the cell membrane. The enzyme catalyses di-trans,octa-cis-undecaprenyl diphosphate + H2O = di-trans,octa-cis-undecaprenyl phosphate + phosphate + H(+). Its function is as follows. Catalyzes the dephosphorylation of undecaprenyl diphosphate (UPP). Confers resistance to bacitracin. This chain is Undecaprenyl-diphosphatase 1, found in Streptomyces avermitilis (strain ATCC 31267 / DSM 46492 / JCM 5070 / NBRC 14893 / NCIMB 12804 / NRRL 8165 / MA-4680).